Consider the following 319-residue polypeptide: Taste receptor type 2 member 39 (319 aa).

Residues 1 to 16 (MAQPSNYWKQDVLPLS) are Extracellular-facing. Residues 17–37 (ILMLTLVATECTIGIIASGIV) traverse the membrane as a helical segment. Residues 38–65 (MAVNAVSWVQKKAISITTRILLLLSVSR) lie on the Cytoplasmic side of the membrane. The helical transmembrane segment at 66-86 (IGLQSIMLIEITSSIFNVAFY) threads the bilayer. At 87-97 (NSVLYRVSNVS) the chain is on the extracellular side. The N-linked (GlcNAc...) asparagine glycan is linked to N95. Residues 98–118 (FVFLNYCSLWFAALLSFFHFV) traverse the membrane as a helical segment. Residues 119-137 (KIANFSYPLFFKLKWRISE) are Cytoplasmic-facing. The chain crosses the membrane as a helical span at residues 138-158 (LMPWLLWLSVFISFSSSMFFS). Over 159–194 (KHKFTVNNNNSLSNNICNFTMKLYVVETNVVNVSFL) the chain is Extracellular. N-linked (GlcNAc...) asparagine glycans are attached at residues N167, N176, and N190. Residues 195–215 (FISGILPPLTMFVATATLLIF) form a helical membrane-spanning segment. At 216–247 (SLRRHTLNMRNSATGSRNPCIEAHMQAIKETS) the chain is on the cytoplasmic side. A helical membrane pass occupies residues 248–268 (CFLFLYILNAAALLLSTSNIV). The Extracellular portion of the chain corresponds to 269–273 (DASLF). A helical transmembrane segment spans residues 274 to 294 (WSIVIRIVLPVYPAGHSVLLI). Topologically, residues 295 to 319 (QNNPGLRRTWKHLQSQIHLYLQNRF) are cytoplasmic.

Belongs to the G-protein coupled receptor T2R family.

The protein localises to the membrane. Putative taste receptor which may play a role in the perception of bitterness. This is Taste receptor type 2 member 39 (Tas2r39) from Mus musculus (Mouse).